The sequence spans 621 residues: Complex I assembly factor ACAD9, mitochondrial (621 aa).

A mitochondrion-targeting transit peptide spans 1-37 (MSGCGLFLRTTAAARACRGLVVSTANRRLLRTSPPVR). Lys41 bears the N6-acetyllysine mark. Lys92 carries the N6-succinyllysine modification. Glu426 (proton acceptor) is an active-site residue. Position 478 is a phosphothreonine (Thr478). An N6-acetyllysine; alternate modification is found at Lys521. Lys521 is modified (N6-succinyllysine; alternate).

Belongs to the acyl-CoA dehydrogenase family. Homodimer. Interacts with NDUFAF1 and ECSIT. Part of the mitochondrial complex I assembly/MCIA complex that comprises at least the core subunits TMEM126B, NDUFAF1, ECSIT and ACAD9 and complement subunits such as COA1 and TMEM186. Interacts with TMEM70 and TMEM242. The cofactor is FAD. Ubiquitously expressed in most normal human tissues and cancer cell lines with high level of expression in heart, skeletal muscles, brain, kidney and liver. In the cerebellum uniquely expressed in the granular layer (at protein level).

It localises to the mitochondrion inner membrane. The enzyme catalyses eicosanoyl-CoA + oxidized [electron-transfer flavoprotein] + H(+) = (2E)-eicosenoyl-CoA + reduced [electron-transfer flavoprotein]. It catalyses the reaction octadecanoyl-CoA + oxidized [electron-transfer flavoprotein] + H(+) = (2E)-octadecenoyl-CoA + reduced [electron-transfer flavoprotein]. The catalysed reaction is oxidized [electron-transfer flavoprotein] + hexadecanoyl-CoA + H(+) = (2E)-hexadecenoyl-CoA + reduced [electron-transfer flavoprotein]. It carries out the reaction decanoyl-CoA + oxidized [electron-transfer flavoprotein] + H(+) = (2E)-decenoyl-CoA + reduced [electron-transfer flavoprotein]. The enzyme catalyses nonanoyl-CoA + oxidized [electron-transfer flavoprotein] + H(+) = (2E)-nonenoyl-CoA + reduced [electron-transfer flavoprotein]. It catalyses the reaction pentadecanoyl-CoA + oxidized [electron-transfer flavoprotein] + H(+) = (2E)-pentadecenoyl-CoA + reduced [electron-transfer flavoprotein]. The catalysed reaction is undecanoyl-CoA + oxidized [electron-transfer flavoprotein] + H(+) = trans-2-undecenoyl-CoA + reduced [electron-transfer flavoprotein]. It carries out the reaction (9Z)-hexadecenoyl-CoA + oxidized [electron-transfer flavoprotein] + H(+) = (2E,9Z)-hexadecadienoyl-CoA + reduced [electron-transfer flavoprotein]. The enzyme catalyses heptadecanoyl-CoA + oxidized [electron-transfer flavoprotein] + H(+) = trans-2-heptadecenoyl-CoA + reduced [electron-transfer flavoprotein]. It catalyses the reaction (9E)-octadecenoyl-CoA + oxidized [electron-transfer flavoprotein] + H(+) = (2E,9E)-octadecadienoyl-CoA + reduced [electron-transfer flavoprotein]. The catalysed reaction is oxidized [electron-transfer flavoprotein] + (9Z)-octadecenoyl-CoA + H(+) = (2E,9Z)-octadecadienoyl-CoA + reduced [electron-transfer flavoprotein]. It carries out the reaction (9Z,12Z)-octadecadienoyl-CoA + oxidized [electron-transfer flavoprotein] + H(+) = (2E,9Z,12Z)-octadecatrienoyl-CoA + reduced [electron-transfer flavoprotein]. The enzyme catalyses (4Z,7Z,10Z,13Z,16Z,19Z)-docosahexaenoyl-CoA + oxidized [electron-transfer flavoprotein] + H(+) = (2E,4Z,7Z,10Z,13Z,16Z,19Z)-docosaheptaenoyl-CoA + reduced [electron-transfer flavoprotein]. It catalyses the reaction tetradecanoyl-CoA + oxidized [electron-transfer flavoprotein] + H(+) = (2E)-tetradecenoyl-CoA + reduced [electron-transfer flavoprotein]. Its function is as follows. As part of the MCIA complex, primarily participates in the assembly of the mitochondrial complex I and therefore plays a role in oxidative phosphorylation. This moonlighting protein also has a dehydrogenase activity toward a broad range of substrates with greater specificity for long-chain unsaturated acyl-CoAs. However, in vivo, it does not seem to play a primary role in fatty acid oxidation. In addition, the function in complex I assembly is independent of the dehydrogenase activity of the protein. This chain is Complex I assembly factor ACAD9, mitochondrial, found in Homo sapiens (Human).